Here is a 374-residue protein sequence, read N- to C-terminus: MQNRRKAFYKLCPNAMPDLSNRLSKKQSKTEKKLHKNIFAHTGPVTIYVDPPSSAVDSALATIDWQDLVDCNSVIQQDAAGGAITQQQDHCLSGEPDFDLQEFRDAVDQFIADQPSLMQPSLGPPEFQLPACNVPVFEPCMTNPLQAQPEHLLPINVQTIPSTEQYWRDVADHNQKALGDALVENNQLQVSLTEKQEEIVSLKEKNIQLNELANQAKHLSSVLDKLMKERTKQNSGATQGRLPVKRSLEDFYPQSNEPDSTQVDEILREISKKCNIALMGSDLSERKRPRLEPMDSMDWQEEGVTEIKMCGAFHGLKTSTGLNSVNLGDTDLEDVSFRTSIKEHSTIRTLAFPQGNAFTIRTSGGGYKFRWVPN.

Positions 164–212 (EQYWRDVADHNQKALGDALVENNQLQVSLTEKQEEIVSLKEKNIQLNEL) form a coiled coil. Positions 230–260 (RTKQNSGATQGRLPVKRSLEDFYPQSNEPDS) are disordered. Residues 330 to 374 (TDLEDVSFRTSIKEHSTIRTLAFPQGNAFTIRTSGGGYKFRWVPN) form a TIRT domain region.

Belongs to the geminin family. As to quaternary structure, component of the EDM complex, at least composed of e2f4, e2f5, mcidas and tfdp1. As to expression, expressed in multiciliate differentiating cells. Expression is lost by stage 26, when multiciliate cells in the skin are fully differentiated, but is then detected in the developing nephrostomes of the kidneys where multiciliate cells form at later stages.

The protein localises to the nucleus. Transcription regulator specifically required for multiciliate cell differentiation. Acts in a multiprotein complex containing E2F4 and E2F5 that binds and activates genes required for centriole biogenesis. Activates genes required for centriole assembly (plk4, cep152) and genes specifically required for motile cilia formation (foxj1). Also promotes the deuterosome pathway of centriole biogenesis by activating expression of ccdc67/deup1, but not its paralog cep63. The polypeptide is Multicilin (mcidas) (Xenopus laevis (African clawed frog)).